A 226-amino-acid chain; its full sequence is 2-C-methyl-D-erythritol 4-phosphate cytidylyltransferase (226 aa).

This sequence belongs to the IspD/TarI cytidylyltransferase family. IspD subfamily.

The catalysed reaction is 2-C-methyl-D-erythritol 4-phosphate + CTP + H(+) = 4-CDP-2-C-methyl-D-erythritol + diphosphate. Its pathway is isoprenoid biosynthesis; isopentenyl diphosphate biosynthesis via DXP pathway; isopentenyl diphosphate from 1-deoxy-D-xylulose 5-phosphate: step 2/6. Its function is as follows. Catalyzes the formation of 4-diphosphocytidyl-2-C-methyl-D-erythritol from CTP and 2-C-methyl-D-erythritol 4-phosphate (MEP). This is 2-C-methyl-D-erythritol 4-phosphate cytidylyltransferase from Rhodococcus jostii (strain RHA1).